Reading from the N-terminus, the 432-residue chain is Serine/threonine-protein kinase Sgk1 (432 aa).

The segment at 67 to 93 (PELMNANPSPPPSPSQQINLGPSSNPH) is disordered. Over residues 82–92 (QQINLGPSSNP) the composition is skewed to polar residues. Residues 99–356 (FHFLKVIGKG…FTEIKNHIFF (258 aa)) form the Protein kinase domain. ATP is bound by residues 105 to 113 (IGKGSFGKV) and Lys-128. The active-site Proton acceptor is the Asp-223. The region spanning 357 to 432 (SPINWDDLIN…SYAPPVDSFL (76 aa)) is the AGC-kinase C-terminal domain.

Belongs to the protein kinase superfamily. AGC Ser/Thr protein kinase family.

It localises to the cytoplasm. Its subcellular location is the nucleus. It is found in the endoplasmic reticulum. It carries out the reaction L-seryl-[protein] + ATP = O-phospho-L-seryl-[protein] + ADP + H(+). It catalyses the reaction L-threonyl-[protein] + ATP = O-phospho-L-threonyl-[protein] + ADP + H(+). In terms of biological role, protein kinase that may play an important role in cellular stress response. May be involved in the regulation of processes such as cell survival, neuronal excitability and renal sodium excretion. This is Serine/threonine-protein kinase Sgk1 (SGK1) from Gallus gallus (Chicken).